A 239-amino-acid polypeptide reads, in one-letter code: Probable replication-associated protein repA2 (239 aa).

The protein belongs to the IncFII RepA family.

In terms of biological role, this protein is essential for plasmid replication; it is involved in copy control functions. The protein is Probable replication-associated protein repA2 (repA2) of Buchnera aphidicola subsp. Baizongia pistaciae (strain Bp).